Here is a 297-residue protein sequence, read N- to C-terminus: Large ribosomal subunit protein uL24m (297 aa).

Serine 2 carries the post-translational modification N-acetylserine. The region spanning 63–96 (FIPGDRVVVMSGASKGNIAVIKSFDKRTNSFILD) is the KOW domain.

It belongs to the universal ribosomal protein uL24 family. Component of the mitochondrial large ribosomal subunit (mt-LSU). Mature yeast 74S mitochondrial ribosomes consist of a small (37S) and a large (54S) subunit. The 37S small subunit contains a 15S ribosomal RNA (15S mt-rRNA) and 34 different proteins. The 54S large subunit contains a 21S rRNA (21S mt-rRNA) and 46 different proteins. uL24m forms the wall of the exit tunnel.

It localises to the mitochondrion. Its function is as follows. Component of the mitochondrial ribosome (mitoribosome), a dedicated translation machinery responsible for the synthesis of mitochondrial genome-encoded proteins, including at least some of the essential transmembrane subunits of the mitochondrial respiratory chain. The mitoribosomes are attached to the mitochondrial inner membrane and translation products are cotranslationally integrated into the membrane. This Saccharomyces cerevisiae (strain ATCC 204508 / S288c) (Baker's yeast) protein is Large ribosomal subunit protein uL24m (MRPL40).